The primary structure comprises 276 residues: Dermonecrotic toxin LlSicTox-alphaIV1i (276 aa).

Residue histidine 5 is part of the active site. Mg(2+)-binding residues include glutamate 25 and aspartate 27. Histidine 41 acts as the Nucleophile in catalysis. 2 disulfides stabilise this stretch: cysteine 45–cysteine 51 and cysteine 47–cysteine 193. Aspartate 85 lines the Mg(2+) pocket.

This sequence belongs to the arthropod phospholipase D family. Class II subfamily. The cofactor is Mg(2+). In terms of tissue distribution, expressed by the venom gland.

It localises to the secreted. It carries out the reaction an N-(acyl)-sphingosylphosphocholine = an N-(acyl)-sphingosyl-1,3-cyclic phosphate + choline. It catalyses the reaction an N-(acyl)-sphingosylphosphoethanolamine = an N-(acyl)-sphingosyl-1,3-cyclic phosphate + ethanolamine. The catalysed reaction is a 1-acyl-sn-glycero-3-phosphocholine = a 1-acyl-sn-glycero-2,3-cyclic phosphate + choline. The enzyme catalyses a 1-acyl-sn-glycero-3-phosphoethanolamine = a 1-acyl-sn-glycero-2,3-cyclic phosphate + ethanolamine. Dermonecrotic toxins cleave the phosphodiester linkage between the phosphate and headgroup of certain phospholipids (sphingolipid and lysolipid substrates), forming an alcohol (often choline) and a cyclic phosphate. This toxin acts on sphingomyelin (SM). It may also act on ceramide phosphoethanolamine (CPE), lysophosphatidylcholine (LPC) and lysophosphatidylethanolamine (LPE), but not on lysophosphatidylserine (LPS), and lysophosphatidylglycerol (LPG). It acts by transphosphatidylation, releasing exclusively cyclic phosphate products as second products. Induces dermonecrosis, hemolysis, increased vascular permeability, edema, inflammatory response, and platelet aggregation. This is Dermonecrotic toxin LlSicTox-alphaIV1i from Loxosceles laeta (South American recluse spider).